The primary structure comprises 799 residues: Histidine biosynthesis trifunctional protein (799 aa).

Residues 1–229 (MVLPILPLID…FIVEQENVGF (229 aa)) are phosphoribosyl-AMP cyclohydrolase. Residues 230 to 312 (CHLETMSCFG…FYFALAKLVT (83 aa)) are phosphoribosyl-ATP pyrophosphohydrolase. Residues 313–799 (NNVSLKDVEN…KLGLIPKDFQ (487 aa)) form a histidinol dehydrogenase region. Zn(2+) contacts are provided by Gln618 and His621. Residues Glu687 and His688 contribute to the active site. Residues Asp721 and His780 each coordinate Zn(2+).

In the C-terminal section; belongs to the histidinol dehydrogenase family. It depends on Zn(2+) as a cofactor.

The enzyme catalyses 1-(5-phospho-beta-D-ribosyl)-5'-AMP + H2O = 1-(5-phospho-beta-D-ribosyl)-5-[(5-phospho-beta-D-ribosylamino)methylideneamino]imidazole-4-carboxamide. It carries out the reaction 1-(5-phospho-beta-D-ribosyl)-ATP + H2O = 1-(5-phospho-beta-D-ribosyl)-5'-AMP + diphosphate + H(+). It catalyses the reaction L-histidinol + 2 NAD(+) + H2O = L-histidine + 2 NADH + 3 H(+). Its pathway is amino-acid biosynthesis; L-histidine biosynthesis; L-histidine from 5-phospho-alpha-D-ribose 1-diphosphate: step 2/9. The protein operates within amino-acid biosynthesis; L-histidine biosynthesis; L-histidine from 5-phospho-alpha-D-ribose 1-diphosphate: step 3/9. It participates in amino-acid biosynthesis; L-histidine biosynthesis; L-histidine from 5-phospho-alpha-D-ribose 1-diphosphate: step 9/9. The chain is Histidine biosynthesis trifunctional protein (HIS4) from Saccharomyces bayanus (Yeast).